A 259-amino-acid chain; its full sequence is Probable 6-phosphogluconolactonase 2 (259 aa).

The protein belongs to the glucosamine/galactosamine-6-phosphate isomerase family. 6-phosphogluconolactonase subfamily.

It is found in the cytoplasm. It localises to the cytosol. The catalysed reaction is 6-phospho-D-glucono-1,5-lactone + H2O = 6-phospho-D-gluconate + H(+). Its pathway is carbohydrate degradation; pentose phosphate pathway; D-ribulose 5-phosphate from D-glucose 6-phosphate (oxidative stage): step 2/3. Catalyzes the hydrolysis of 6-phosphogluconolactone to 6-phosphogluconate. This Arabidopsis thaliana (Mouse-ear cress) protein is Probable 6-phosphogluconolactonase 2.